We begin with the raw amino-acid sequence, 221 residues long: ATP phosphoribosyltransferase (221 aa).

This sequence belongs to the ATP phosphoribosyltransferase family. Short subfamily. Heteromultimer composed of HisG and HisZ subunits.

The protein localises to the cytoplasm. It carries out the reaction 1-(5-phospho-beta-D-ribosyl)-ATP + diphosphate = 5-phospho-alpha-D-ribose 1-diphosphate + ATP. The protein operates within amino-acid biosynthesis; L-histidine biosynthesis; L-histidine from 5-phospho-alpha-D-ribose 1-diphosphate: step 1/9. Functionally, catalyzes the condensation of ATP and 5-phosphoribose 1-diphosphate to form N'-(5'-phosphoribosyl)-ATP (PR-ATP). Has a crucial role in the pathway because the rate of histidine biosynthesis seems to be controlled primarily by regulation of HisG enzymatic activity. This is ATP phosphoribosyltransferase from Anaeromyxobacter dehalogenans (strain 2CP-C).